We begin with the raw amino-acid sequence, 486 residues long: Dipeptide and tripeptide permease B (486 aa).

Over 1 to 27 the chain is Cytoplasmic; the sequence is MNKPVSIGLLQQPKPFFMIFFVELWER. The chain crosses the membrane as a helical span at residues 28 to 48; the sequence is FGYYGVQGVLTVYFVQKLGFS. The Periplasmic portion of the chain corresponds to 49-52; that stretch reads QEQA. Residues 53–73 form a helical membrane-spanning segment; it reads FITFGAFAALVFGLISIGGYV. Over 74-82 the chain is Cytoplasmic; sequence GDHLLGTKR. A helical membrane pass occupies residues 83-103; that stretch reads TIVLGAIVLAIGYFMTGLSIL. The Periplasmic segment spans residues 104-106; sequence HPN. A helical membrane pass occupies residues 107 to 127; it reads LIFYALGTIAVGNGLFKANPA. Residues 128 to 146 lie on the Cytoplasmic side of the membrane; it reads SLLSKCYPPKDPRLDGAFT. A helical transmembrane segment spans residues 147-167; the sequence is LFYMSINLGSLFSLALAPVIA. The Periplasmic segment spans residues 168–172; the sequence is EKFSY. A helical transmembrane segment spans residues 173-193; that stretch reads AVTYNICGIGLIIALLVYIFC. The Cytoplasmic segment spans residues 194 to 211; it reads RNTVRNIGSEPDHQRINY. A helical transmembrane segment spans residues 212-232; it reads TNLFLVVAGSVVMVYVCAWLM. Histidine 233 is a topological domain (periplasmic). A helical membrane pass occupies residues 234 to 254; it reads NVKIANIMLITLSVIVVFIFF. Residues 255–267 are Cytoplasmic-facing; that stretch reads REALKQDKIGRNK. A helical transmembrane segment spans residues 268–288; that stretch reads MFVAFILMLQAIVFFILYAQM. Residues 289 to 311 are Periplasmic-facing; that stretch reads PTSLNFFAIHNVHHQLLGFNINP. Residues 312-332 traverse the membrane as a helical segment; it reads VSFQALNPFWIVVASPILAVL. Topologically, residues 333–348 are cytoplasmic; the sequence is YTHWGAKGKDLTMPAK. A helical membrane pass occupies residues 349 to 369; that stretch reads FAVGMFLCSLGFLTAAAAGLW. At 370–375 the chain is on the periplasmic side; sequence FADEQG. Residues 376-396 traverse the membrane as a helical segment; sequence LTSAWFIVLVYLFQGVGELMI. Over 397-419 the chain is Cytoplasmic; the sequence is SALGLAMIAALVPQYLMGFILGM. Residues 420 to 440 form a helical membrane-spanning segment; the sequence is WYLTQATSSLLGGYVAALTAA. The Periplasmic portion of the chain corresponds to 441-456; it reads PKGITDPLQTLPVYTS. A helical membrane pass occupies residues 457–477; that stretch reads VFGKIGIATFIVAIIMAATVP. At 478–486 the chain is on the cytoplasmic side; it reads LLNRMMQEK.

Belongs to the major facilitator superfamily. Proton-dependent oligopeptide transporter (POT/PTR) (TC 2.A.17) family. DtpB subfamily.

The protein localises to the cell inner membrane. Its function is as follows. Proton-dependent permease that transports di- and tripeptides. The sequence is that of Dipeptide and tripeptide permease B from Photorhabdus luminescens (Xenorhabdus luminescens).